We begin with the raw amino-acid sequence, 159 residues long: Large ribosomal subunit protein uL22 (159 aa).

This sequence belongs to the universal ribosomal protein uL22 family. As to quaternary structure, part of the 50S ribosomal subunit.

Functionally, this protein binds specifically to 23S rRNA. It makes multiple contacts with different domains of the 23S rRNA in the assembled 50S subunit and ribosome. The globular domain of the protein is located near the polypeptide exit tunnel on the outside of the subunit, while an extended beta-hairpin is found that lines the wall of the exit tunnel in the center of the 70S ribosome. In Ignicoccus hospitalis (strain KIN4/I / DSM 18386 / JCM 14125), this protein is Large ribosomal subunit protein uL22.